Reading from the N-terminus, the 509-residue chain is Maturase K (509 aa).

The protein belongs to the intron maturase 2 family. MatK subfamily.

Its subcellular location is the plastid. It is found in the chloroplast. In terms of biological role, usually encoded in the trnK tRNA gene intron. Probably assists in splicing its own and other chloroplast group II introns. The chain is Maturase K from Thuja occidentalis (Northern white-cedar).